A 65-amino-acid polypeptide reads, in one-letter code: Alpha-toxin Bot1 (65 aa).

Residues 2–64 (RDAYIAQPEN…VPIRIPGKCH (63 aa)) enclose the LCN-type CS-alpha/beta domain. Intrachain disulfides connect C12–C63, C16–C36, C22–C46, and C26–C48. Residue F65 is modified to Phenylalanine amide.

It belongs to the long (4 C-C) scorpion toxin superfamily. Sodium channel inhibitor family. Alpha subfamily. As to expression, expressed by the venom gland.

The protein localises to the secreted. In terms of biological role, alpha toxins bind voltage-independently at site-3 of sodium channels (Nav) and inhibit the inactivation of the activated channels, thereby blocking neuronal transmission. The polypeptide is Alpha-toxin Bot1 (Buthus occitanus tunetanus (Common European scorpion)).